A 315-amino-acid chain; its full sequence is Olfactory receptor 8J3 (315 aa).

At 1–25 (MAPENFTRVTEFILTGVSSCPELQI) the chain is on the extracellular side. The N-linked (GlcNAc...) asparagine glycan is linked to Asn5. A helical membrane pass occupies residues 26-46 (PLFLVFLVLYVLTMAGNLGII). Topologically, residues 47–54 (TLTSVDSR) are cytoplasmic. The chain crosses the membrane as a helical span at residues 55 to 75 (LQNPMYFFLRHLAIINLGNST). Residues 76 to 99 (VIAPKMLMNFLVKKKTTSFYECAT) are Extracellular-facing. An intrachain disulfide couples Cys97 to Cys189. A helical transmembrane segment spans residues 100–120 (QLGGFLFFIVSEVMMLAVMAY). At 121 to 139 (DRYVAICNPLLYMVVVSRR) the chain is on the cytoplasmic side. Residues 140–160 (LCLLLVSLTYLYGFSTAIVVS) traverse the membrane as a helical segment. Over 161–197 (PCIFSVSYCSSNIINHFYCDIAPLLALSCSDTYIPET) the chain is Extracellular. The helical transmembrane segment at 198-217 (IVFISAATNLVFSMITVLVS) threads the bilayer. The Cytoplasmic segment spans residues 218–237 (YFNIVLSILRIRSPEGRKKA). Residues 238–258 (FSTCASHMIAVTVFYGTMLFM) traverse the membrane as a helical segment. Residues 259 to 271 (YLQPQTNHSLDTD) are Extracellular-facing. The N-linked (GlcNAc...) asparagine glycan is linked to Asn265. The helical transmembrane segment at 272-292 (KMASVFYTLVIPMLNPLIYSL) threads the bilayer. Over 293-315 (RNNDVNVALKKFMENPCYSFKSM) the chain is Cytoplasmic.

It belongs to the G-protein coupled receptor 1 family.

It is found in the cell membrane. Odorant receptor. The chain is Olfactory receptor 8J3 (OR8J3) from Homo sapiens (Human).